We begin with the raw amino-acid sequence, 70 residues long: Antimicrobial peptide VpCT1 (70 aa).

The signal sequence occupies residues 1 to 23 (MKNQFAVLLVALVLLQLFSQSEA). Leu36 is modified (leucine amide). A propeptide spanning residues 37–70 (GKRGLRNFDLEQMDDTYEPELSEADLRYLQDLLR) is cleaved from the precursor.

The protein belongs to the non-disulfide-bridged peptide (NDBP) superfamily. Short antimicrobial peptide (group 4) family. As to expression, expressed by the venom gland.

The protein localises to the secreted. Its subcellular location is the target cell membrane. Functionally, antimicrobial peptide with potent activity against bacteria S.aureus (MIC=4.7 uM) and E.coli (MIC=31.5 uM), and pathogenic yeasts C.albicans (MIC=25 uM) and C.glabrata (MIC=12.5 uM). Is not very effective against P.aeruginosa (MIC=150 and &gt;300 uM). Also provokes moderate hemolysis on human erythrocytes (HC(50)=10.5 uM). This is Antimicrobial peptide VpCT1 from Mesomexovis punctatus (Scorpion).